Reading from the N-terminus, the 298-residue chain is Protease HtpX homolog (298 aa).

2 consecutive transmembrane segments (helical) span residues 14 to 34 (VVLL…AGYL) and 39 to 59 (YAMG…SMIF). Residue H143 participates in Zn(2+) binding. Residue E144 is part of the active site. H147 contributes to the Zn(2+) binding site. The next 2 helical transmembrane spans lie at 158-178 (IAVA…RMLW) and 197-217 (IITL…ASLI). E226 contributes to the Zn(2+) binding site.

The protein belongs to the peptidase M48B family. Zn(2+) serves as cofactor.

It localises to the cell membrane. This is Protease HtpX homolog from Streptococcus pyogenes serotype M49 (strain NZ131).